The sequence spans 333 residues: Flotillin-like protein FloA (333 aa).

The chain crosses the membrane as a helical span at residues 10-30 (IFLIAGGIIFLVLFFHYVPFF).

The protein belongs to the flotillin-like FloA family. Homooligomerizes.

The protein localises to the cell membrane. It localises to the membrane raft. Found in functional membrane microdomains (FMM) that may be equivalent to eukaryotic membrane rafts. FMMs are highly dynamic and increase in number as cells age. Flotillins are thought to be important factors in membrane fluidity. This chain is Flotillin-like protein FloA, found in Bacteroides fragilis (strain ATCC 25285 / DSM 2151 / CCUG 4856 / JCM 11019 / LMG 10263 / NCTC 9343 / Onslow / VPI 2553 / EN-2).